The following is a 614-amino-acid chain: UvrABC system protein C (614 aa).

In terms of domain architecture, GIY-YIG spans 20–98 (TAPGVYRMYA…IKSLSPRYNV (79 aa)). Positions 207–242 (DELTRELGEQMQAASEALEFEQAARLRDLISSLRSM) constitute a UVR domain.

The protein belongs to the UvrC family. As to quaternary structure, interacts with UvrB in an incision complex.

The protein localises to the cytoplasm. Its function is as follows. The UvrABC repair system catalyzes the recognition and processing of DNA lesions. UvrC both incises the 5' and 3' sides of the lesion. The N-terminal half is responsible for the 3' incision and the C-terminal half is responsible for the 5' incision. The sequence is that of UvrABC system protein C from Stenotrophomonas maltophilia (strain R551-3).